Consider the following 561-residue polypeptide: Putative transport protein YbjL (561 aa).

Helical transmembrane passes span 8 to 28, 32 to 52, 66 to 86, 94 to 114, and 158 to 178; these read LLNGNYILLLFVVLALGLCLG, LGSIQLGNSIGVLVVSLLLGQ, FMLFIFCVGVEAGPNFFSIFF, MLALVMVGSALVIALGLGKLF, and NLSLGYALTYLIGLVSLIVGA. RCK C-terminal domains follow at residues 200–288 and 292–373; these read RGLD…SFRN and VFDR…RIGF. Transmembrane regions (helical) follow at residues 383 to 403, 406 to 426, 451 to 471, 475 to 495, and 540 to 560; these read LLAFCAFFVIGLMIGMITFQF, FSFGMGNAAGLLFAGIMLGFM, VFMAGVGLSAGSGINNGLGAI, MLIAGLIVSLVPVVICFLFGA, and AIANVLLTLAGTIIVMVWPGL.

This sequence belongs to the AAE transporter (TC 2.A.81) family. YbjL subfamily.

The protein resides in the cell membrane. The chain is Putative transport protein YbjL from Shigella flexneri.